A 186-amino-acid chain; its full sequence is Inner membrane-spanning protein YciB (186 aa).

6 helical membrane passes run 3 to 23 (FLFD…AGIY), 24 to 44 (VATT…WFKH), 49 to 69 (AMQW…LIFH), 76 to 96 (WKPT…AVLL), 121 to 141 (LVWS…AYHF), and 149 to 169 (FKLF…SVWL).

This sequence belongs to the YciB family.

Its subcellular location is the cell inner membrane. Plays a role in cell envelope biogenesis, maintenance of cell envelope integrity and membrane homeostasis. This is Inner membrane-spanning protein YciB from Ralstonia nicotianae (strain ATCC BAA-1114 / GMI1000) (Ralstonia solanacearum).